The chain runs to 279 residues: MDRTQTFIKDCLFTKCLEDPEKPFNENRFQDTLLLLPTDGGLTSRLQRQQRKSKLNLDNLQKVSQLESADKQLEKRDYQRINKNSKIALREYINNCKKNTKKCLKLAYENKITDKEDLLHYIEEKHPTIYESLPQYVDFVPMYKELWINYIKELLNITKNLKTFNGSLALLKLSMADYNGALLRVTKSKNKTLIGLQGIVIWDSQKFFIMIVKGNIIDEIKCIPKKGTVFQFEIPISDDDDSALRYSILGDRFKYRSVDRAGRKFKSRRCDDMLYYIQN.

S64 is modified (phosphoserine).

Belongs to the eukaryotic/archaeal RNase P protein component 1 family. Component of nuclear RNase P and RNase MRP complexes. RNase P consists of an RNA moiety and at least 9 protein subunits including POP1, POP3, POP4, POP5, POP6, POP7, POP8, RPP1 and RPR2. RNase MRP complex consists of an RNA moiety and at least 10 protein subunits including POP1, POP3, POP4, POP5, POP6, POP7, POP8, RMP1, RPP1 and SNM1, many of which are shared with the RNase P complex.

The protein localises to the nucleus. Functionally, required for 5.8S rRNA and tRNA processing; associated with RNase MRP and RNase P. The sequence is that of RNases MRP/P 32.9 kDa subunit (POP4) from Saccharomyces cerevisiae (strain ATCC 204508 / S288c) (Baker's yeast).